A 339-amino-acid polypeptide reads, in one-letter code: Dihydroorotate dehydrogenase (quinone) (339 aa).

Residues 61 to 65 (AGLDK) and threonine 85 each bind FMN. Lysine 65 is a substrate binding site. 110 to 114 (NRMGF) serves as a coordination point for substrate. Asparagine 138 and asparagine 171 together coordinate FMN. Asparagine 171 is a substrate binding site. Serine 174 functions as the Nucleophile in the catalytic mechanism. Asparagine 176 is a binding site for substrate. The FMN site is built by lysine 216 and threonine 244. 245–246 (NT) serves as a coordination point for substrate. FMN-binding positions include glycine 267, glycine 296, and 317–318 (YS).

This sequence belongs to the dihydroorotate dehydrogenase family. Type 2 subfamily. Monomer. It depends on FMN as a cofactor.

The protein resides in the cell membrane. The catalysed reaction is (S)-dihydroorotate + a quinone = orotate + a quinol. It functions in the pathway pyrimidine metabolism; UMP biosynthesis via de novo pathway; orotate from (S)-dihydroorotate (quinone route): step 1/1. Its function is as follows. Catalyzes the conversion of dihydroorotate to orotate with quinone as electron acceptor. This Pseudomonas fluorescens (strain Pf0-1) protein is Dihydroorotate dehydrogenase (quinone).